The chain runs to 219 residues: GTP-binding protein Rab-3D (219 aa).

A2 carries the post-translational modification N-acetylalanine. 29–37 contributes to the GDP binding site; that stretch reads GNSSVGKTS. S31, S32, V33, G34, K35, T36, S37, P49, and S53 together coordinate GTP. T36 contributes to the Mg(2+) binding site. The Switch 1 signature appears at 49–58; the sequence is PAFVSTVGID. The Mg(2+) site is built by T54 and D77. G80 serves as a coordination point for GTP. The Switch 2 signature appears at 80-96; the sequence is GQERYRTITTAYYRGAM. At T86 the chain carries Phosphothreonine. GTP is bound by residues N135, K136, D138, A166, and K167. Residues 135-138 and 165-167 contribute to the GDP site; these read NKCD and SAK. Residue S190 is modified to Phosphoserine. Residues 190–219 are disordered; that stretch reads SLEPSSSPGSNGKGPALGDTPPPQPSSCGC. Low complexity predominate over residues 193 to 203; it reads PSSSPGSNGKG. Over residues 209–219 the composition is skewed to pro residues; it reads TPPPQPSSCGC. S-geranylgeranyl cysteine attachment occurs at residues C217 and C219. The residue at position 219 (C219) is a Cysteine methyl ester; partial.

It belongs to the small GTPase superfamily. Rab family. As to quaternary structure, interacts with RIMS1, RIMS2, RPH3A and RPH3AL. Interacts with RAB3IP. The GTP-bound form interacts with REP15. Interacts with CHM; phosphorylation at Thr-86 disrupts this interaction. Interacts with MADD (via uDENN domain); the GTP-bound form is preferred for interaction. The cofactor is Mg(2+). Post-translationally, in fetal glands the majority of the proteins are methylated, whereas in neonatal and adult glands, only 50% are methylated. Phosphorylation of Thr-86 in the switch II region by LRRK2 prevents the association of RAB regulatory proteins, including CHM. In terms of tissue distribution, highest levels found in lung.

The protein resides in the cell membrane. It carries out the reaction GTP + H2O = GDP + phosphate + H(+). With respect to regulation, regulated by guanine nucleotide exchange factors (GEFs) which promote the exchange of bound GDP for free GTP. Regulated by GTPase activating proteins (GAPs) which increase the GTP hydrolysis activity. Inhibited by GDP dissociation inhibitors (GDIs) which prevent Rab-GDP dissociation. Its function is as follows. The small GTPases Rab are key regulators of intracellular membrane trafficking, from the formation of transport vesicles to their fusion with membranes. Rabs cycle between an inactive GDP-bound form and an active GTP-bound form that is able to recruit to membranes different sets of downstream effectors directly responsible for vesicle formation, movement, tethering and fusion. RAB3D may be involved in the insulin-induced exocytosis of GLUT4-containing vesicles in adipocytes. The chain is GTP-binding protein Rab-3D from Rattus norvegicus (Rat).